The following is a 493-amino-acid chain: Solute carrier family 2, facilitated glucose transporter member 3 (493 aa).

The Cytoplasmic portion of the chain corresponds to 1–10 (MGTTKVTPSL). Residues 11 to 32 (VFAVTVATIGSFQFGYNTGVIN) traverse the membrane as a helical segment. Residues 33 to 64 (APETILKDFLNYTLEERLEDLPSEGLLTALWS) lie on the Extracellular side of the membrane. N43 carries N-linked (GlcNAc...) asparagine glycosylation. The helical transmembrane segment at 65–85 (LCVAIFSVGGMIGSFSVGLFV) threads the bilayer. The Cytoplasmic segment spans residues 86-90 (NRFGR). The helical transmembrane segment at 91–111 (RNSMLLVNLLAIIAGCLMGFA) threads the bilayer. Topologically, residues 112–118 (KIAESVE) are extracellular. A helical transmembrane segment spans residues 119–142 (MLILGRLLIGIFCGLCTGFVPMYI). Residues 143–153 (GEVSPTALRGA) lie on the Cytoplasmic side of the membrane. A helical transmembrane segment spans residues 154-174 (FGTLNQLGIVVGILVAQIFGL). Q159 provides a ligand contact to D-glucose. Topologically, residues 175–183 (DFILGSEEL) are extracellular. The chain crosses the membrane as a helical span at residues 184 to 204 (WPGLLGLTIIPAILQSAALPF). Residues 205–269 (CPESPRFLLI…LFRSPNYVQP (65 aa)) are Cytoplasmic-facing. The residue at position 232 (T232) is a Phosphothreonine. Residues 270–290 (LLISIVLQLSQQLSGINAVFY) traverse the membrane as a helical segment. Positions 277–279 (QLS) are important for selectivity against fructose. D-glucose-binding positions include 280–281 (QQ) and N286. Over 291-304 (YSTGIFKDAGVQEP) the chain is Extracellular. Residues 305-325 (IYATIGAGVVNTIFTVVSLFL) traverse the membrane as a helical segment. N315 lines the D-glucose pocket. Residues 326–331 (VERAGR) are Cytoplasmic-facing. The helical transmembrane segment at 332–352 (RTLHMIGLGGMAVCSVFMTIS) threads the bilayer. Residues 353-363 (LLLKDDYEAMS) are Extracellular-facing. The chain crosses the membrane as a helical span at residues 364 to 389 (FVCIVAILIYVAFFEIGPGPIPWFIV). D-glucose is bound by residues E378 and W386. At 390–399 (AELFSQGPRP) the chain is on the cytoplasmic side. The helical transmembrane segment at 400 to 420 (AAIAVAGCCNWTSNFLVGMLF) threads the bilayer. The Extracellular portion of the chain corresponds to 421–429 (PSAAAYLGA). A helical transmembrane segment spans residues 430-450 (YVFIIFAAFLIFFLIFTFFKV). Residues 451–493 (PETKGRTFEDIARAFEGQAHSGKGPAGVELNSMQPVKETPGNA) lie on the Cytoplasmic side of the membrane. The interval 469-493 (AHSGKGPAGVELNSMQPVKETPGNA) is disordered. 2 positions are modified to phosphoserine: S471 and S482. Residue T489 is modified to Phosphothreonine.

The protein belongs to the major facilitator superfamily. Sugar transporter (TC 2.A.1.1) family. Glucose transporter subfamily. As to quaternary structure, interacts with SMIM43; the interaction may promote SLC2A3-mediated glucose transport to meet the energy needs of mesendoderm differentiation. In terms of tissue distribution, expressed in spermatozoa (at protein level). Detected in brain (at protein level). Abundantly expressed in the hippocampus, cerebellum and cerebral cortex with lower expression in the dentate gyrus and piriform cortex.

It localises to the cell membrane. The protein localises to the perikaryon. It is found in the cell projection. It carries out the reaction D-glucose(out) = D-glucose(in). The enzyme catalyses D-galactose(in) = D-galactose(out). Deoxyglucose transport is inhibited by D-glucose, D-galactose and maltose. Galactose transport is inhibited by D-glucose and maltose. Its function is as follows. Facilitative glucose transporter. Can also mediate the uptake of various other monosaccharides across the cell membrane. Mediates the uptake of glucose, 2-deoxyglucose, galactose, mannose, xylose and fucose, and probably also dehydroascorbate. Does not mediate fructose transport. Required for mesendoderm differentiation. This Mus musculus (Mouse) protein is Solute carrier family 2, facilitated glucose transporter member 3.